A 43-amino-acid polypeptide reads, in one-letter code: Protein PsbN (43 aa).

A helical membrane pass occupies residues Asn-5 to Phe-27.

Belongs to the PsbN family.

The protein localises to the plastid. It localises to the chloroplast thylakoid membrane. Its function is as follows. May play a role in photosystem I and II biogenesis. This chain is Protein PsbN, found in Ephedra sinica (Chinese ephedra).